The sequence spans 345 residues: MKQLKRKRKSNFSVQETQTLLKEITKRKEVIFSKQLNTTINVMKRMAWEEIAQCVNAVGEGEQRTGTEVKRRYLDWRALMKRKRMKANMKLVGSGFPLPTSDLDDSLTEDIDEKIAFRNDANFDWQNVADFRDAGGSLTEVKVEEEERDPQSPEFEIEEEEEMLSSVIPDSRRENELPDFPHIDEFFTLNSTPSRPTYDEPHLLMNIEKQKLELEKRRLDIEAERLQVEKERLQIEKERLRHLDLEHERLQLEKERLQIEREKWRLQLVSTEKPALENELGQGEKSMLQPQDIEAEKLKLERERLQLEKDRLQFLKFESEKLQIEKERLQVEKERLRIQKEGHLP.

Residues Leu4–Arg77 enclose the Myb-like domain. Lys9 participates in a covalent cross-link: Glycyl lysine isopeptide (Lys-Gly) (interchain with G-Cter in SUMO2). Residue Ser106 is modified to Phosphoserine. Glycyl lysine isopeptide (Lys-Gly) (interchain with G-Cter in SUMO2) cross-links involve residues Lys114 and Lys142. A disordered region spans residues Val141–Asn175. At Thr188 the chain carries Phosphothreonine. The stretch at His202 to Leu344 forms a coiled coil. Residues Lys237, Lys254, and Lys273 each participate in a glycyl lysine isopeptide (Lys-Gly) (interchain with G-Cter in SUMO2) cross-link.

In Rattus norvegicus (Rat), this protein is Myb/SANT-like DNA-binding domain-containing protein 4 (Msantd4).